The primary structure comprises 1477 residues: Neuralized-like protein 4 (1477 aa).

2 disordered regions span residues 1 to 26 (MAELHPRTGKLISLSNGNRTAARKQP) and 168 to 196 (QPPPEEEEEEDAEEQEGSLVPLGQSRPDK). The NHR 1 domain occupies 1–167 (MAELHPRTGK…KCTQITVLSC (167 aa)). Acidic residues predominate over residues 171-183 (PEEEEEEDAEEQE). NHR domains lie at 250 to 417 (ALLF…IVHN), 450 to 616 (QLLF…IMDE), 645 to 813 (DLRF…LTGG), and 841 to 1010 (SHRF…TVSS). The tract at residues 1012–1041 (LLEEPDATKPPSITSESEEEEDPADHGDPH) is disordered. The NHR 6 domain maps to 1048-1211 (SLQFLANHGK…QCEQVSIVTG (164 aa)).

Ubiquitinated. This ubiquitination leads to proteasomal degradation.

It is found in the cytoplasm. Its subcellular location is the cytoskeleton. The protein localises to the microtubule organizing center. The protein resides in the centrosome. It localises to the centriole. Promotes CCP110 ubiquitination and proteasome-dependent degradation. By counteracting accumulation of CP110, maintains normal centriolar homeostasis and preventing formation of ectopic microtubular organizing centers. The polypeptide is Neuralized-like protein 4 (neurl4) (Xenopus tropicalis (Western clawed frog)).